Reading from the N-terminus, the 740-residue chain is Ribosome-releasing factor 2, mitochondrial (740 aa).

A mitochondrion-targeting transit peptide spans 1–29 (MLKYAWQSGPKQSNRWLWHLSNQIWKRSY). A tr-type G domain is found at 31–310 (SKIRNIGILA…AVNAYLPAPE (280 aa)). Residues 40–47 (AHIDAGKT), 104–108 (DTPGH), and 158–161 (NKMD) contribute to the GTP site.

Belongs to the TRAFAC class translation factor GTPase superfamily. Classic translation factor GTPase family. EF-G/EF-2 subfamily.

Its subcellular location is the mitochondrion. Mitochondrial GTPase that mediates the disassembly of ribosomes from messenger RNA at the termination of mitochondrial protein biosynthesis. Not involved in the GTP-dependent ribosomal translocation step during translation elongation. This chain is Ribosome-releasing factor 2, mitochondrial, found in Drosophila melanogaster (Fruit fly).